Here is a 581-residue protein sequence, read N- to C-terminus: Serine/threonine-protein kinase SSN3 (581 aa).

Residues 34 to 57 (LWSQQQQQQLLDTKGSASTSKSPM) are disordered. Residues 48–57 (GSASTSKSPM) are compositionally biased toward polar residues. Residues 85–475 (YEIIGYIAAG…AIDALEHEYF (391 aa)) enclose the Protein kinase domain. ATP-binding positions include 91–99 (IAAGTYGKV) and Lys195. Asp298 (proton acceptor) is an active-site residue.

The protein belongs to the protein kinase superfamily. CMGC Ser/Thr protein kinase family. CDC2/CDKX subfamily. Component of the SRB8-11 complex, a regulatory module of the Mediator complex. The cofactor is Mg(2+).

The protein resides in the nucleus. It carries out the reaction L-seryl-[protein] + ATP = O-phospho-L-seryl-[protein] + ADP + H(+). The enzyme catalyses L-threonyl-[protein] + ATP = O-phospho-L-threonyl-[protein] + ADP + H(+). The catalysed reaction is [DNA-directed RNA polymerase] + ATP = phospho-[DNA-directed RNA polymerase] + ADP + H(+). Its function is as follows. Component of the SRB8-11 complex. The SRB8-11 complex is a regulatory module of the Mediator complex which is itself involved in regulation of basal and activated RNA polymerase II-dependent transcription. The SRB8-11 complex may be involved in the transcriptional repression of a subset of genes regulated by Mediator. It may inhibit the association of the Mediator complex with RNA polymerase II to form the holoenzyme complex. The SRB8-11 complex phosphorylates the C-terminal domain (CTD) of the largest subunit of RNA polymerase II. The chain is Serine/threonine-protein kinase SSN3 (SSN3) from Eremothecium gossypii (strain ATCC 10895 / CBS 109.51 / FGSC 9923 / NRRL Y-1056) (Yeast).